The primary structure comprises 430 residues: Asparagine--tRNA ligase (430 aa).

It belongs to the class-II aminoacyl-tRNA synthetase family. In terms of assembly, homodimer.

It is found in the cytoplasm. The enzyme catalyses tRNA(Asn) + L-asparagine + ATP = L-asparaginyl-tRNA(Asn) + AMP + diphosphate + H(+). This is Asparagine--tRNA ligase from Bacillus velezensis (strain DSM 23117 / BGSC 10A6 / LMG 26770 / FZB42) (Bacillus amyloliquefaciens subsp. plantarum).